The chain runs to 672 residues: ABC transporter G family member 21 (672 aa).

Residues 1 to 35 (MMPPNEQESSFPKTPSANRHETSPVQENRFSSPSH) show a composition bias toward polar residues. The segment at 1-59 (MMPPNEQESSFPKTPSANRHETSPVQENRFSSPSHVNPCLDDDNDHDGPSHQSRQSSVL) is disordered. Residues 50–59 (SHQSRQSSVL) are compositionally biased toward low complexity. Residues 68–322 (LKFEELTYSI…FGSIGYQPGS (255 aa)) form the ABC transporter domain. 117 to 124 (GPSGSGKT) contacts ATP. An ABC transmembrane type-2 domain is found at 411 to 617 (MQFSVLLKRG…CYKLLVGVQY (207 aa)). The next 6 helical transmembrane spans lie at 429–449 (FSGLRIFMVMSVSLLSGLLWW), 460–480 (VGLLFFFSIFWGFFPLFNAIF), 512–532 (LPMELILPTIFVTITYWMGGL), 543–563 (LMIVLYNVLVAQGVGLALGAI), 576–596 (VLMLVFLLAGGYYIQHIPGFI), and 649–669 (WDVLALAVMLLLYRVLAYLAL).

Belongs to the ABC transporter superfamily. ABCG family. Eye pigment precursor importer (TC 3.A.1.204) subfamily.

It localises to the membrane. In Arabidopsis thaliana (Mouse-ear cress), this protein is ABC transporter G family member 21 (ABCG21).